Reading from the N-terminus, the 118-residue chain is Flowering-promoting factor 1-like protein 4 (118 aa).

It belongs to the FPF1 family.

This Oryza sativa subsp. japonica (Rice) protein is Flowering-promoting factor 1-like protein 4.